A 333-amino-acid polypeptide reads, in one-letter code: Serine/threonine-protein phosphatase 4 catalytic subunit 1 (333 aa).

The interval 1–29 (MALAVADTQNETFARSESPTSGPSDQLST) is disordered. Over residues 7 to 27 (DTQNETFARSESPTSGPSDQL) the composition is skewed to polar residues. D79, H81, D107, and N139 together coordinate Mn(2+). Catalysis depends on H140, which acts as the Proton donor. Residues H189 and H264 each coordinate Mn(2+). At L333 the chain carries Leucine methyl ester.

Belongs to the PPP phosphatase family. PP-4 (PP-X) subfamily. In terms of assembly, serine/threonine-protein phosphatase 4 (PP4) occurs in different assemblies of the catalytic and one or more regulatory subunits. The regulatory subunits are likely to be ppfr-1, ppfr-2, ppfr-4 and smk-1. Interacts with mei-1. The cofactor is Mn(2+). In terms of processing, methylation at the C-terminal Leu-333 is critical for interactions with regulatory subunits.

The protein localises to the cytoplasm. It localises to the cytoskeleton. The protein resides in the microtubule organizing center. It is found in the centrosome. The enzyme catalyses O-phospho-L-seryl-[protein] + H2O = L-seryl-[protein] + phosphate. The catalysed reaction is O-phospho-L-threonyl-[protein] + H2O = L-threonyl-[protein] + phosphate. Its function is as follows. Protein phosphatase which plays an essential role in meiosis and in early embryonic mitosis. During spermatocyte meiosis and the first embryonic mitosis, regulates centrosome maturation, and thus spindle formation, by recruiting some of the components of the pericentriolar material (PCM). During oocyte meiosis I, regulates meiotic chromosome dynamics including synapsis-independent chromosome pairing, restriction of synapsis to homologous chromosomes, programmed DNA double-strand break initiation and crossover formation resulting in chiasma formation. During oocyte meiosis II and probably together with regulatory subunit ppfr-1, may regulate microtubule severing by dephosphorylating and activating mei-1, a component of the katanin microtubule severing complex. This is Serine/threonine-protein phosphatase 4 catalytic subunit 1 (pph-4.1) from Caenorhabditis briggsae.